Reading from the N-terminus, the 475-residue chain is Protein nucleotidyltransferase YdiU (475 aa).

Positions 82, 84, 85, 105, 117, 118, 168, and 175 each coordinate ATP. The active-site Proton acceptor is D240. Residues N241 and D250 each contribute to the Mg(2+) site. An ATP-binding site is contributed by D250.

Belongs to the SELO family. Mg(2+) serves as cofactor. Requires Mn(2+) as cofactor.

The catalysed reaction is L-seryl-[protein] + ATP = 3-O-(5'-adenylyl)-L-seryl-[protein] + diphosphate. It catalyses the reaction L-threonyl-[protein] + ATP = 3-O-(5'-adenylyl)-L-threonyl-[protein] + diphosphate. The enzyme catalyses L-tyrosyl-[protein] + ATP = O-(5'-adenylyl)-L-tyrosyl-[protein] + diphosphate. It carries out the reaction L-histidyl-[protein] + UTP = N(tele)-(5'-uridylyl)-L-histidyl-[protein] + diphosphate. The catalysed reaction is L-seryl-[protein] + UTP = O-(5'-uridylyl)-L-seryl-[protein] + diphosphate. It catalyses the reaction L-tyrosyl-[protein] + UTP = O-(5'-uridylyl)-L-tyrosyl-[protein] + diphosphate. Nucleotidyltransferase involved in the post-translational modification of proteins. It can catalyze the addition of adenosine monophosphate (AMP) or uridine monophosphate (UMP) to a protein, resulting in modifications known as AMPylation and UMPylation. The sequence is that of Protein nucleotidyltransferase YdiU from Aeromonas salmonicida (strain A449).